A 130-amino-acid chain; its full sequence is Small ribosomal subunit protein uS11 (130 aa).

The protein belongs to the universal ribosomal protein uS11 family. In terms of assembly, part of the 30S ribosomal subunit. Interacts with proteins S7 and S18. Binds to IF-3.

Its function is as follows. Located on the platform of the 30S subunit, it bridges several disparate RNA helices of the 16S rRNA. Forms part of the Shine-Dalgarno cleft in the 70S ribosome. The protein is Small ribosomal subunit protein uS11 of Prochlorococcus marinus (strain AS9601).